The chain runs to 195 residues: Peptidyl-tRNA hydrolase (195 aa).

Tyrosine 17 contacts tRNA. The Proton acceptor role is filled by histidine 22. Residues tyrosine 68, asparagine 70, and asparagine 116 each contribute to the tRNA site.

Belongs to the PTH family. In terms of assembly, monomer.

Its subcellular location is the cytoplasm. The catalysed reaction is an N-acyl-L-alpha-aminoacyl-tRNA + H2O = an N-acyl-L-amino acid + a tRNA + H(+). Hydrolyzes ribosome-free peptidyl-tRNAs (with 1 or more amino acids incorporated), which drop off the ribosome during protein synthesis, or as a result of ribosome stalling. In terms of biological role, catalyzes the release of premature peptidyl moieties from peptidyl-tRNA molecules trapped in stalled 50S ribosomal subunits, and thus maintains levels of free tRNAs and 50S ribosomes. This Shewanella frigidimarina (strain NCIMB 400) protein is Peptidyl-tRNA hydrolase.